The chain runs to 375 residues: Oleosin-B6 (375 aa).

The segment at 1–32 (MKEEIQNETAQTQLQREGRMFSFLFPVIEVIK) is polar. The next 3 membrane-spanning stretches (helical) occupy residues 21 to 43 (FSFL…SVVF), 55 to 75 (AVAL…LVPA), and 81 to 101 (LLAT…GLLM). The tract at residues 33–112 (VVMASVASVV…LIKHPGKEGA (80 aa)) is hydrophobic. Disordered stretches follow at residues 144–284 (PGVG…SFLS) and 303–375 (IPGF…DESS). Residues 148 to 179 (KKSEGRGESKGKKGKKGKSEHGRGKHEGEGKS) are compositionally biased toward basic and acidic residues. Residues 193 to 210 (NNPPPAGAPPTGSPPAAP) are compositionally biased toward pro residues. 23 repeat units span residues 207–209 (PAA), 210–212 (PAA), 213–215 (PEA), 216–218 (PAA), 219–221 (PAA), 222–224 (PAA), 225–227 (PAA), 228–230 (PAA), 231–233 (PAA), 234–236 (PAA), 237–239 (PED), 240–242 (PAA), 243–245 (PAA), 246–248 (PEA), 249–251 (PAT), 252–254 (PAA), 255–257 (PPA), 258–260 (PAA), 261–263 (APA), 264–266 (PAA), 267–269 (PAA), 270–272 (PPA), and 273–275 (PAA). Residues 207 to 275 (PAAPAAPEAP…APAAPPAPAA (69 aa)) are 23 X 3 AA approximate tandem repeats of P-A-A. Positions 211-251 (AAPEAPAAPAAPAAPAAPAAPAAPAAPEDPAAPAAPEAPAT) are enriched in low complexity. Over residues 252–280 (PAAPPAPAAAPAPAAPAAPPAPAAPPRPP) the composition is skewed to pro residues. The segment covering 316-331 (SKGGKKSKGKGKSNGR) has biased composition (basic residues).

This sequence belongs to the oleosin family. As to expression, the full-length protein is found in the tapetal lipid bodies of immature anthers, the proteolytically cleaved C-terminal product is found on the coats of pollen grains. Not found in flowers, developing embryos or leaf tissue.

It localises to the lipid droplet. The protein localises to the membrane. Its function is as follows. Many of the major pollen coat proteins are derived from endoproteolytic cleavage of oleosin-like proteins. This Brassica napus (Rape) protein is Oleosin-B6.